Reading from the N-terminus, the 197-residue chain is Probable nicotinate-nucleotide adenylyltransferase (197 aa).

Belongs to the NadD family.

The enzyme catalyses nicotinate beta-D-ribonucleotide + ATP + H(+) = deamido-NAD(+) + diphosphate. It participates in cofactor biosynthesis; NAD(+) biosynthesis; deamido-NAD(+) from nicotinate D-ribonucleotide: step 1/1. Functionally, catalyzes the reversible adenylation of nicotinate mononucleotide (NaMN) to nicotinic acid adenine dinucleotide (NaAD). This Bordetella pertussis (strain Tohama I / ATCC BAA-589 / NCTC 13251) protein is Probable nicotinate-nucleotide adenylyltransferase.